The chain runs to 296 residues: Glycine--tRNA ligase alpha subunit (296 aa).

Belongs to the class-II aminoacyl-tRNA synthetase family. Tetramer of two alpha and two beta subunits.

It localises to the cytoplasm. The catalysed reaction is tRNA(Gly) + glycine + ATP = glycyl-tRNA(Gly) + AMP + diphosphate. This Exiguobacterium sibiricum (strain DSM 17290 / CCUG 55495 / CIP 109462 / JCM 13490 / 255-15) protein is Glycine--tRNA ligase alpha subunit.